The chain runs to 701 residues: MPDLLLELFSEEIPARMQAKAAEDLRRMVTDKLVAEGLVYEGAKAFATPRRLALTVHGIPARQADLKEERKGPRVGGPDAAIQGFLKATGLSSLEEATIQRDPKKGDFYVALIEKPGRATLDVLAEMLPVIVRTFPWPKSMRWGKRSEKPGALNWVRPLHAITATFGLETEEPDVVSFSVDGIEAGQTTYGHRFMAPAAISVRRFEDYEAKLLDAKVVLDPQRRKDTIVTDAKQLAFAQGYELVEDPVLLDEVSGLVEWPVVLMGSFDPEYLKVPAEVIRATIRNNQKCFVVRDPKTGGLAPKFILTANIEATDGGKTIIAGNERVIRARLSDAKFFYETDLKTRLEDRLPKFEQIVFHEKLGTQAARIARIEKLAAEIAPLVGADAAKTARAAKLAKADLLTEVVGEFPEVQGLMGKYYALAQGEDVSVAAACEEHYKPQGPGDRVPTDPVSVAVALADKLDTLVGFWAIDEKPTGSKDPYALRRAALGVIRLITENSLRLSLLQVAGSALAGLHVKSELDAGKLSADLLSFFADRLKVQLREQGARHDLVDAVFALGGQDDLLMVVRRVEALGKFLETDDGKNLLAGTKRASNILAIEEKKDKRKFDGAPDAALYRLDEEKALAKAIGEVGSEAGTAVAKEDFAAAMHAMAKLRPAVDAFFDKVKVNDDDAAIRENRLKLLNEIRNATRAVADFSKIEG.

Belongs to the class-II aminoacyl-tRNA synthetase family. As to quaternary structure, tetramer of two alpha and two beta subunits.

It is found in the cytoplasm. It catalyses the reaction tRNA(Gly) + glycine + ATP = glycyl-tRNA(Gly) + AMP + diphosphate. The polypeptide is Glycine--tRNA ligase beta subunit (Bradyrhizobium sp. (strain BTAi1 / ATCC BAA-1182)).